The primary structure comprises 361 residues: Peptide chain release factor 1 (361 aa).

Glutamine 237 carries the post-translational modification N5-methylglutamine.

The protein belongs to the prokaryotic/mitochondrial release factor family. Methylated by PrmC. Methylation increases the termination efficiency of RF1.

It is found in the cytoplasm. In terms of biological role, peptide chain release factor 1 directs the termination of translation in response to the peptide chain termination codons UAG and UAA. The chain is Peptide chain release factor 1 from Alcanivorax borkumensis (strain ATCC 700651 / DSM 11573 / NCIMB 13689 / SK2).